A 188-amino-acid polypeptide reads, in one-letter code: MATLNPLSWVTWLAENEDKLRPPVNNYCLYQGNDFILMAVGGPNERNDYHVNETEVRLQWHQPSETNEQEWFYQVQGDMLLRVIENDTFRDIPIKEGEMFLLPGNTPHNPVRYKDTIGLVMERQRPAESRDRLRWYCTKGNHCSPTIIREEVFHCADLGSQLKPIIERWQQDEESRRCGECGCIADPK.

O2 is bound at residue Arg-46. Positions 50, 70, and 108 each coordinate Fe cation. Glu-70 serves as a coordination point for substrate. Residues Arg-112 and Glu-122 each coordinate substrate.

Belongs to the 3-HAO family. Requires Fe(2+) as cofactor.

It is found in the cytoplasm. It carries out the reaction 3-hydroxyanthranilate + O2 = (2Z,4Z)-2-amino-3-carboxymuconate 6-semialdehyde. The protein operates within cofactor biosynthesis; NAD(+) biosynthesis; quinolinate from L-kynurenine: step 3/3. Its function is as follows. Catalyzes the oxidative ring opening of 3-hydroxyanthranilate to 2-amino-3-carboxymuconate semialdehyde, which spontaneously cyclizes to quinolinate. In Aspergillus fumigatus (strain CBS 144.89 / FGSC A1163 / CEA10) (Neosartorya fumigata), this protein is 3-hydroxyanthranilate 3,4-dioxygenase 2 (bna1-2).